A 187-amino-acid polypeptide reads, in one-letter code: Flavin prenyltransferase UbiX (187 aa).

FMN-binding positions include 9–11 (GAS), Ser-34, and Arg-123. Positions 153 and 169 each coordinate dimethylallyl phosphate.

The protein belongs to the UbiX/PAD1 family.

It catalyses the reaction dimethylallyl phosphate + FMNH2 = prenylated FMNH2 + phosphate. Functionally, flavin prenyltransferase that catalyzes the synthesis of the prenylated FMN cofactor (prenyl-FMN) for 4-hydroxy-3-polyprenylbenzoic acid decarboxylase UbiD. The prenyltransferase is metal-independent and links a dimethylallyl moiety from dimethylallyl monophosphate (DMAP) to the flavin N5 and C6 atoms of FMN. This chain is Flavin prenyltransferase UbiX, found in Helicobacter pylori (strain ATCC 700392 / 26695) (Campylobacter pylori).